Consider the following 32-residue polypeptide: Trypsin inhibitor 3 (32 aa).

3 disulfides stabilise this stretch: C6–C23, C13–C25, and C19–C31.

Belongs to the protease inhibitor I7 (squash-type serine protease inhibitor) family.

It localises to the secreted. Inhibits trypsin. The polypeptide is Trypsin inhibitor 3 (Cucurbita pepo (Vegetable marrow)).